Reading from the N-terminus, the 210-residue chain is Large ribosomal subunit protein bL25 (210 aa).

The segment at 179–210 (LPPQQEEEIHSGEQQEPGQPEAEEGRETTPEG) is disordered. The span at 201-210 (EEGRETTPEG) shows a compositional bias: basic and acidic residues.

This sequence belongs to the bacterial ribosomal protein bL25 family. CTC subfamily. Part of the 50S ribosomal subunit; part of the 5S rRNA/L5/L18/L25 subcomplex. Contacts the 5S rRNA. Binds to the 5S rRNA independently of L5 and L18.

Its function is as follows. This is one of the proteins that binds to the 5S RNA in the ribosome where it forms part of the central protuberance. In Geobacillus thermodenitrificans (strain NG80-2), this protein is Large ribosomal subunit protein bL25.